The following is a 349-amino-acid chain: Ribosomal RNA small subunit methyltransferase H (349 aa).

Residues 34–36, D54, F81, D102, and Q109 contribute to the S-adenosyl-L-methionine site; that span reads GGH.

The protein belongs to the methyltransferase superfamily. RsmH family.

The protein resides in the cytoplasm. The enzyme catalyses cytidine(1402) in 16S rRNA + S-adenosyl-L-methionine = N(4)-methylcytidine(1402) in 16S rRNA + S-adenosyl-L-homocysteine + H(+). Functionally, specifically methylates the N4 position of cytidine in position 1402 (C1402) of 16S rRNA. This chain is Ribosomal RNA small subunit methyltransferase H, found in Dehalococcoides mccartyi (strain ATCC BAA-2266 / KCTC 15142 / 195) (Dehalococcoides ethenogenes (strain 195)).